The primary structure comprises 163 residues: Probable chemoreceptor glutamine deamidase CheD (163 aa).

Belongs to the CheD family.

The enzyme catalyses L-glutaminyl-[protein] + H2O = L-glutamyl-[protein] + NH4(+). In terms of biological role, probably deamidates glutamine residues to glutamate on methyl-accepting chemotaxis receptors (MCPs), playing an important role in chemotaxis. The sequence is that of Probable chemoreceptor glutamine deamidase CheD from Pyrococcus abyssi (strain GE5 / Orsay).